A 333-amino-acid polypeptide reads, in one-letter code: Olfactory receptor 9S13 (333 aa).

Residues 1 to 35 (MATAVHRNGSLTPVSLRVFVLVGFGGGALTQALLF) are Extracellular-facing. N-linked (GlcNAc...) asparagine glycosylation occurs at Asn8. Residues 36–56 (AVFLVLYVVTVLGNLTMIVVI) form a helical membrane-spanning segment. The Cytoplasmic portion of the chain corresponds to 57 to 72 (TLDARLHSPMYFFLKN). Residues 73–93 (LSFVDLCYSSAIAPNALANFL) form a helical membrane-spanning segment. Topologically, residues 94–106 (STSKVISFEACAT) are extracellular. A disulfide bridge connects residues Cys104 and Cys196. Residues 107–127 (QFFFFSLLATTETFLLAVMAY) traverse the membrane as a helical segment. The Cytoplasmic segment spans residues 128–150 (DRFMAICSPLRYPVTMCPTTCTR). A helical membrane pass occupies residues 151 to 171 (LVLGTFCVGCLNSIVQTSLTF). Over 172–203 (QLPFCSSNRIDHFYCDVPPLLQLACASTALNE) the chain is Extracellular. The helical transmembrane segment at 204–224 (LFLFGLCGFIIVSTTLAVLVS) threads the bilayer. Topologically, residues 225 to 251 (YGYITVTILRMHSGSGRHKVFSTCGSH) are cytoplasmic. The chain crosses the membrane as a helical span at residues 252–272 (LTAVSLFYGTLFVMYAQPGAL). At 273–278 (TSMEQG) the chain is on the extracellular side. The helical transmembrane segment at 279-299 (KVVSIFYTLVIPMLNPLIYSL) threads the bilayer. Residues 300-333 (RNKDVKDALQRLGQRHSLVKAVRGCPAAGGNASV) are Cytoplasmic-facing.

It belongs to the G-protein coupled receptor 1 family.

The protein resides in the cell membrane. Functionally, odorant receptor. In Mus musculus (Mouse), this protein is Olfactory receptor 9S13.